A 609-amino-acid chain; its full sequence is Replication protein A 70 kDa DNA-binding subunit (609 aa).

The segment at 112 to 164 is disordered; that stretch reads IGNPHPYNDGQGPPQPAAPAPASAPPPSKPQNISAPPPPSMNRGASKLFGGGS. The span at 124–151 shows a compositional bias: pro residues; the sequence is PPQPAAPAPASAPPPSKPQNISAPPPPS. The segment at residues 189 to 273 is a DNA-binding region (OB); the sequence is WTVRARVTNK…VKNDYEMTFN (85 aa). The C4-type zinc-finger motif lies at 472 to 494; that stretch reads CPSQDCNKKVIDQQNGLFRCEKC.

This sequence belongs to the replication factor A protein 1 family. Component of the heterotrimeric canonical replication protein A complex (RPA). Interacts with rpain-a.

It localises to the nucleus. It is found in the PML body. Functionally, as part of the heterotrimeric replication protein A complex (RPA/RP-A), binds and stabilizes single-stranded DNA intermediates, that form during DNA replication or upon DNA stress. It prevents their reannealing and in parallel, recruits and activates different proteins and complexes involved in DNA metabolism. Thereby, it plays an essential role both in DNA replication and the cellular response to DNA damage. The polypeptide is Replication protein A 70 kDa DNA-binding subunit (rpa1) (Xenopus tropicalis (Western clawed frog)).